Consider the following 727-residue polypeptide: Glucans biosynthesis glucosyltransferase H (727 aa).

The segment at 18–43 is disordered; it reads SAMPNERPGAMEPQSLSQMPEGFPRR. A run of 7 helical transmembrane segments spans residues 58–78, 94–114, 278–298, 408–428, 460–480, 496–516, and 572–592; these read FFVVGGALALSAFAIYEMGAV, LFAINFCWIALAFCSGIAGFF, LQQFAARIYGPVIGTGLGWWV, IMAYLSSPFWLLLILTGLMLA, LFYITMGVLFGPKIFGVLLLL, ILSVIFEVILSALIAPIMMFI, and LLAWMSPALIGLWLAVPISAW.

The protein belongs to the glycosyltransferase 2 family. OpgH subfamily.

The protein localises to the cell inner membrane. It functions in the pathway glycan metabolism; osmoregulated periplasmic glucan (OPG) biosynthesis. Its function is as follows. Involved in the biosynthesis of osmoregulated periplasmic glucans (OPGs). The sequence is that of Glucans biosynthesis glucosyltransferase H from Shewanella sp. (strain ANA-3).